The sequence spans 540 residues: Chaperonin GroEL 2 (540 aa).

ATP is bound by residues 29–32 (TLGP), 86–90 (DGTTT), Gly413, and Asp492. The tract at residues 521 to 540 (KPEKEKASVPGGGDMGGMDF) is disordered. Gly residues predominate over residues 530 to 540 (PGGGDMGGMDF).

It belongs to the chaperonin (HSP60) family. Forms a cylinder of 14 subunits composed of two heptameric rings stacked back-to-back. Interacts with the co-chaperonin GroES.

It is found in the secreted. The protein localises to the capsule. Its subcellular location is the cell surface. It localises to the cell wall. It catalyses the reaction ATP + H2O + a folded polypeptide = ADP + phosphate + an unfolded polypeptide.. Together with its co-chaperonin GroES, plays an essential role in assisting protein folding. The GroEL-GroES system forms a nano-cage that allows encapsulation of the non-native substrate proteins and provides a physical environment optimized to promote and accelerate protein folding. This is Chaperonin GroEL 2 from Mycobacterium tuberculosis (strain ATCC 25177 / H37Ra).